A 569-amino-acid chain; its full sequence is 2-isopropylmalate synthase (569 aa).

The 275-residue stretch at 31 to 305 folds into the Pyruvate carboxyltransferase domain; the sequence is PRWMSTDLRD…APELDFSDID (275 aa). Residues Asp-40, His-244, His-246, and Asn-280 each coordinate Mg(2+). The segment at 437 to 569 is regulatory domain; it reads RETPLRYVSH…TASASAATEA (133 aa).

This sequence belongs to the alpha-IPM synthase/homocitrate synthase family. LeuA type 2 subfamily. In terms of assembly, homodimer. Mg(2+) serves as cofactor.

It is found in the cytoplasm. It catalyses the reaction 3-methyl-2-oxobutanoate + acetyl-CoA + H2O = (2S)-2-isopropylmalate + CoA + H(+). Its pathway is amino-acid biosynthesis; L-leucine biosynthesis; L-leucine from 3-methyl-2-oxobutanoate: step 1/4. Functionally, catalyzes the condensation of the acetyl group of acetyl-CoA with 3-methyl-2-oxobutanoate (2-ketoisovalerate) to form 3-carboxy-3-hydroxy-4-methylpentanoate (2-isopropylmalate). The sequence is that of 2-isopropylmalate synthase from Cupriavidus taiwanensis (strain DSM 17343 / BCRC 17206 / CCUG 44338 / CIP 107171 / LMG 19424 / R1) (Ralstonia taiwanensis (strain LMG 19424)).